We begin with the raw amino-acid sequence, 453 residues long: Gamma-aminobutyric acid receptor subunit alpha-6 (453 aa).

The N-terminal stretch at 1-19 (MLLLLPWLFSLLWIENAQA) is a signal peptide. The Extracellular segment spans residues 20–243 (QLEDEGNFYS…FHLQRKMGYF (224 aa)). The N-linked (GlcNAc...) asparagine glycan is linked to asparagine 31. Arginine 84 lines the 4-aminobutanoate pocket. Asparagine 128 and asparagine 141 each carry an N-linked (GlcNAc...) asparagine glycan. Threonine 147 is a binding site for 4-aminobutanoate. Cysteine 156 and cysteine 170 are joined by a disulfide. The helical transmembrane segment at 244–264 (MIQIYTPCIMTVILSQVSFWI) threads the bilayer. The Cytoplasmic portion of the chain corresponds to 265-270 (NKESVP). A helical membrane pass occupies residues 271–290 (ARTVFGITTVLTMTTLSISA). Residues 291–304 (RHSLPKVSYATAMD) are Extracellular-facing. The helical transmembrane segment at 305-325 (WFIAVCFAFVFSALIEFAAVN) threads the bilayer. Residues 326–422 (YFTNLQSQKA…GTSKIDQYSR (97 aa)) are Cytoplasmic-facing. Serine 375 carries the post-translational modification Phosphoserine. Threonine 403 is subject to Phosphothreonine. The chain crosses the membrane as a helical span at residues 423 to 443 (ILFPVAFAGFNLVYWIVYLSK). Topologically, residues 444 to 453 (DTMEVSSTVE) are extracellular.

The protein belongs to the ligand-gated ion channel (TC 1.A.9) family. Gamma-aminobutyric acid receptor (TC 1.A.9.5) subfamily. GABRA6 sub-subfamily. In terms of assembly, heteropentamer, formed by a combination of alpha (GABRA1-6), beta (GABRB1-3), gamma (GABRG1-3), delta (GABRD), epsilon (GABRE), rho (GABRR1-3), pi (GABRP) and theta (GABRQ) chains, each subunit exhibiting distinct physiological and pharmacological properties. Binds UBQLN1. In terms of tissue distribution, expressed in brain, in cerebellar granule cells.

The protein localises to the postsynaptic cell membrane. It localises to the cell membrane. The catalysed reaction is chloride(in) = chloride(out). Alpha subunit of the heteropentameric ligand-gated chloride channel gated by gamma-aminobutyric acid (GABA), a major inhibitory neurotransmitter in the brain. GABA-gated chloride channels, also named GABA(A) receptors (GABAAR), consist of five subunits arranged around a central pore and contain GABA active binding site(s) located at the alpha and beta subunit interface(s). When activated by GABA, GABAARs selectively allow the flow of chloride anions across the cell membrane down their electrochemical gradient. Alpha-6/GABRA6 subunits are found at both synaptic and extrasynaptic sites. Chloride influx into the postsynaptic neuron following GABAAR opening decreases the neuron ability to generate a new action potential, thereby reducing nerve transmission. Extrasynaptic alpha-6-containing receptors contribute to the tonic GABAergic inhibition. Alpha-6 subunits are also present on glutamatergic synapses. This Rattus norvegicus (Rat) protein is Gamma-aminobutyric acid receptor subunit alpha-6.